A 471-amino-acid polypeptide reads, in one-letter code: Monocarboxylate transporter 11 (471 aa).

Residues 1-13 (MPAPQRKHRRGGF) show a composition bias toward basic residues. Residues 1 to 31 (MPAPQRKHRRGGFSHRCFPTPQTAMTPQPAG) form a disordered region. The Cytoplasmic portion of the chain corresponds to 1-35 (MPAPQRKHRRGGFSHRCFPTPQTAMTPQPAGPPDG). Residues 19 to 28 (PTPQTAMTPQ) show a composition bias toward low complexity. The next 12 helical transmembrane spans lie at 36–56 (GWGW…YGLL), 78–98 (AWIS…GSAL), 106–126 (PVVM…AFAS), 131–151 (LYLG…APAL), 163–183 (VLAV…LAPA), 198–218 (LLLG…LPLV), 243–263 (AFSI…VPYV), 273–293 (GLGG…DAGA), 312–332 (LAVF…VPVV), 333–353 (GGEE…GLSA), 367–389 (LVGV…LGGL), and 407–427 (ASFL…IGLP). Over 428–471 (RALPSCGPASPPATPPPETGELLPAPQAVLLSPGGPGSTLDTTC) the chain is Cytoplasmic.

Belongs to the major facilitator superfamily. Monocarboxylate porter (TC 2.A.1.13) family. Interacts with isoform 2 of BSG. As to expression, expressed in liver, salivary gland and thyroid.

The protein localises to the endoplasmic reticulum membrane. The protein resides in the cell membrane. It catalyses the reaction pyruvate(out) + H(+)(out) = pyruvate(in) + H(+)(in). Functionally, proton-linked monocarboxylate transporter. It catalyzes the transport of pyruvate across the plasma membrane. Probably involved in hepatic lipid metabolism: overexpression results in an increase of triacylglycerol(TAG) levels, small increases in intracellular diacylglycerols and decreases in lysophosphatidylcholine, cholesterol ester and sphingomyelin lipids. The protein is Monocarboxylate transporter 11 (SLC16A11) of Homo sapiens (Human).